The following is a 152-amino-acid chain: Large-conductance mechanosensitive channel (152 aa).

3 consecutive transmembrane segments (helical) span residues 21–41 (IDLA…DSLV), 44–64 (VVMP…NKFL), and 92–112 (GNFI…FWMV).

The protein belongs to the MscL family. As to quaternary structure, homopentamer.

Its subcellular location is the cell inner membrane. In terms of biological role, channel that opens in response to stretch forces in the membrane lipid bilayer. May participate in the regulation of osmotic pressure changes within the cell. In Bordetella bronchiseptica (strain ATCC BAA-588 / NCTC 13252 / RB50) (Alcaligenes bronchisepticus), this protein is Large-conductance mechanosensitive channel.